The following is a 100-amino-acid chain: Urease subunit gamma (100 aa).

It belongs to the urease gamma subunit family. In terms of assembly, heterotrimer of UreA (gamma), UreB (beta) and UreC (alpha) subunits. Three heterotrimers associate to form the active enzyme.

It is found in the cytoplasm. The catalysed reaction is urea + 2 H2O + H(+) = hydrogencarbonate + 2 NH4(+). The protein operates within nitrogen metabolism; urea degradation; CO(2) and NH(3) from urea (urease route): step 1/1. This Bordetella bronchiseptica (strain ATCC BAA-588 / NCTC 13252 / RB50) (Alcaligenes bronchisepticus) protein is Urease subunit gamma.